The sequence spans 89 residues: Large ribosomal subunit protein bL27 (89 aa).

Residues 1-21 (MAHKKAGGSSRNGRDSQSKRL) form a disordered region.

Belongs to the bacterial ribosomal protein bL27 family.

The sequence is that of Large ribosomal subunit protein bL27 from Rhizobium rhizogenes (strain K84 / ATCC BAA-868) (Agrobacterium radiobacter).